We begin with the raw amino-acid sequence, 343 residues long: MNKVFSDFLAWTREHEWGCDESYNLTLSNGTKLSVWDSGVLEVSPASPGHKDVVLSCAVHGNETAPIEICRDIINDIIDEKQTVTHRTLFLIANPASINKGERFVEENMNRLFSGEHGKGSTQNKERERAAKMENYVERFYQSAPEGSRERFHYDLHTAIRDSKREKFAVYPFTHGAPYSRQQLQFLLACGVDTVLLNQAPTTTFSYFSARQFNAHAFTVELGKVRPFGENDRAKFAAAETTLRDLISQTELDFGPFEPEQHYVFKEAQTINRTQPDFELNFADDVANFTSFNKGELLAWDGDKACYAQHDGEHIIFPNAKVALGHRALLTVVRVPTESLDLV.

Positions 60, 63, and 157 each coordinate Zn(2+). E221 is a catalytic residue.

This sequence belongs to the AspA/AstE family. Succinylglutamate desuccinylase subfamily. The cofactor is Zn(2+).

The enzyme catalyses N-succinyl-L-glutamate + H2O = L-glutamate + succinate. It participates in amino-acid degradation; L-arginine degradation via AST pathway; L-glutamate and succinate from L-arginine: step 5/5. Its function is as follows. Transforms N(2)-succinylglutamate into succinate and glutamate. This Idiomarina loihiensis (strain ATCC BAA-735 / DSM 15497 / L2-TR) protein is Succinylglutamate desuccinylase.